The chain runs to 312 residues: tRNA-cytidine(32) 2-sulfurtransferase (312 aa).

The PP-loop motif motif lies at 47-52 (SGGKDS). Cys122, Cys125, and Cys213 together coordinate [4Fe-4S] cluster.

The protein belongs to the TtcA family. Homodimer. It depends on Mg(2+) as a cofactor. The cofactor is [4Fe-4S] cluster.

The protein localises to the cytoplasm. The enzyme catalyses cytidine(32) in tRNA + S-sulfanyl-L-cysteinyl-[cysteine desulfurase] + AH2 + ATP = 2-thiocytidine(32) in tRNA + L-cysteinyl-[cysteine desulfurase] + A + AMP + diphosphate + H(+). The protein operates within tRNA modification. In terms of biological role, catalyzes the ATP-dependent 2-thiolation of cytidine in position 32 of tRNA, to form 2-thiocytidine (s(2)C32). The sulfur atoms are provided by the cysteine/cysteine desulfurase (IscS) system. The polypeptide is tRNA-cytidine(32) 2-sulfurtransferase (Shewanella frigidimarina (strain NCIMB 400)).